A 237-amino-acid polypeptide reads, in one-letter code: High-affinity branched-chain amino acid transport ATP-binding protein LivF (237 aa).

In terms of domain architecture, ABC transporter spans 6–237 (LSFDKVSAHY…EAVRSAYLGG (232 aa)). 38–45 (GANGAGKT) is an ATP binding site.

Belongs to the ABC transporter superfamily.

In terms of biological role, component of the leucine-specific transport system. The sequence is that of High-affinity branched-chain amino acid transport ATP-binding protein LivF (livF) from Escherichia coli (strain K12).